The chain runs to 64 residues: Large ribosomal subunit protein bL35 (64 aa).

The span at Met1–Ile22 shows a compositional bias: basic residues. The segment at Met1–Thr39 is disordered.

It belongs to the bacterial ribosomal protein bL35 family.

In Salinispora arenicola (strain CNS-205), this protein is Large ribosomal subunit protein bL35.